The chain runs to 243 residues: MTDLRPGLTAIVPAAGIGSRMGAECPKQYLQLAGRTILEHTLTRLLSHPAIAQVIVALAPHDRWFDTLAVAADPRILRVEGGAERAFSVLNALHVAAGEWVLVHDAARPCLTHGDLDALIATAMACDGAILGSRVRDTMKRSDGAGNILATVDREQLWHALTPQMFPTRPLRRALEEGLALGATITDEASAMERAGFTVRMVEGRADNIKVTRPEDLSLAGLYLQQQNARQPAQPDSPTEELA.

Belongs to the IspD/TarI cytidylyltransferase family. IspD subfamily.

It catalyses the reaction 2-C-methyl-D-erythritol 4-phosphate + CTP + H(+) = 4-CDP-2-C-methyl-D-erythritol + diphosphate. Its pathway is isoprenoid biosynthesis; isopentenyl diphosphate biosynthesis via DXP pathway; isopentenyl diphosphate from 1-deoxy-D-xylulose 5-phosphate: step 2/6. Catalyzes the formation of 4-diphosphocytidyl-2-C-methyl-D-erythritol from CTP and 2-C-methyl-D-erythritol 4-phosphate (MEP). This chain is 2-C-methyl-D-erythritol 4-phosphate cytidylyltransferase, found in Aeromonas hydrophila subsp. hydrophila (strain ATCC 7966 / DSM 30187 / BCRC 13018 / CCUG 14551 / JCM 1027 / KCTC 2358 / NCIMB 9240 / NCTC 8049).